A 540-amino-acid polypeptide reads, in one-letter code: Probable pectinesterase/pectinesterase inhibitor 60 (540 aa).

An N-terminal signal peptide occupies residues 1–31 (MNIMMVQNISFLSLHLLLILLLCLRPLTTVA). The segment at 32–185 (DGNSTNIDGW…SHLISNCLAV (154 aa)) is pectinesterase inhibitor 60. Asn-34, Asn-91, Asn-95, Asn-120, Asn-161, and Asn-195 each carry an N-linked (GlcNAc...) asparagine glycan. Positions 225–526 (NLVVAKDGSG…FSVGKFIAGT (302 aa)) are pectinesterase 60. Residues Thr-302 and Gln-332 each contribute to the substrate site. Asp-355 serves as the catalytic Proton donor; for pectinesterase activity. The cysteines at positions 369 and 389 are disulfide-linked. Asp-376 serves as the catalytic Nucleophile; for pectinesterase activity. Arg-444 and Trp-446 together coordinate substrate.

In the N-terminal section; belongs to the PMEI family. The protein in the C-terminal section; belongs to the pectinesterase family. Expressed in siliques.

The protein resides in the secreted. It is found in the cell wall. The enzyme catalyses [(1-&gt;4)-alpha-D-galacturonosyl methyl ester](n) + n H2O = [(1-&gt;4)-alpha-D-galacturonosyl](n) + n methanol + n H(+). The protein operates within glycan metabolism; pectin degradation; 2-dehydro-3-deoxy-D-gluconate from pectin: step 1/5. Its function is as follows. Acts in the modification of cell walls via demethylesterification of cell wall pectin. This chain is Probable pectinesterase/pectinesterase inhibitor 60 (PME60), found in Arabidopsis thaliana (Mouse-ear cress).